The chain runs to 517 residues: UDP-N-acetylmuramyl-tripeptide synthetase (517 aa).

Ser-38 contributes to the UDP-N-acetyl-alpha-D-muramoyl-L-alanyl-D-glutamate binding site. ATP is bound at residue 116 to 122 (GTKGKTT). Residues Asn-160, 162 to 163 (TT), Ser-189, and Arg-197 contribute to the UDP-N-acetyl-alpha-D-muramoyl-L-alanyl-D-glutamate site. Lys-231 is modified (N6-carboxylysine).

The protein belongs to the MurCDEF family. MurE subfamily. In terms of processing, carboxylation is probably crucial for Mg(2+) binding and, consequently, for the gamma-phosphate positioning of ATP.

It is found in the cytoplasm. It functions in the pathway cell wall biogenesis; peptidoglycan biosynthesis. Catalyzes the addition of an amino acid to the nucleotide precursor UDP-N-acetylmuramoyl-L-alanyl-D-glutamate (UMAG) in the biosynthesis of bacterial cell-wall peptidoglycan. The protein is UDP-N-acetylmuramyl-tripeptide synthetase of Lacticaseibacillus paracasei (strain ATCC 334 / BCRC 17002 / CCUG 31169 / CIP 107868 / KCTC 3260 / NRRL B-441) (Lactobacillus paracasei).